The following is a 254-amino-acid chain: Phosphate import ATP-binding protein PstB (254 aa).

The region spanning methionine 9–isoleucine 249 is the ABC transporter domain. Glycine 41–serine 48 serves as a coordination point for ATP.

This sequence belongs to the ABC transporter superfamily. Phosphate importer (TC 3.A.1.7) family. As to quaternary structure, the complex is composed of two ATP-binding proteins (PstB), two transmembrane proteins (PstC and PstA) and a solute-binding protein (PstS).

Its subcellular location is the cell membrane. The catalysed reaction is phosphate(out) + ATP + H2O = ADP + 2 phosphate(in) + H(+). Part of the ABC transporter complex PstSACB involved in phosphate import. Responsible for energy coupling to the transport system. In Clostridioides difficile (strain 630) (Peptoclostridium difficile), this protein is Phosphate import ATP-binding protein PstB.